Consider the following 4468-residue polypeptide: Replicase polyprotein 1a (4468 aa).

Residues 54–196 (LVNHVRVNCS…PWSILLRKGG (143 aa)) form the CoV Nsp1 globular domain. The region spanning 217 to 247 (FNVEDACEEVHLNPKGKYSCKAYALLKGYRG) is the BetaCoV Nsp1 C-terminal domain. The 261-residue stretch at 251 to 511 (ILFVDQYGCD…TDAICRSLYM (261 aa)) folds into the CoV Nsp2 N-terminal domain. Zn(2+) contacts are provided by C390, C395, C411, and C414. Residues 390–414 (CCGDTCDFRGWVAGNMMDGFPCPGC) form a C4 region. The CoV Nsp2 middle domain maps to 518-706 (CGNLEQRAIL…VDKFKAFFKV (189 aa)). A CoV Nsp2 C-terminal domain is found at 726 to 832 (SNRVCLAGSK…LDQCWRFPCA (107 aa)). Residues 834 to 946 (KKVEFNDKPK…MYCSFSAPDD (113 aa)) enclose the Ubiquitin-like 1 domain. A disordered region spans residues 999 to 1027 (SQEELAEPDAVGSQTPIASAEETEVGEAS). Positions 1084–1333 (AFDAVCSEAL…VCFVKGDVIK (250 aa)) constitute a Peptidase C16 1 domain. Residue C1121 is the For PL1-PRO activity of the active site. The Zn(2+) site is built by C1198, C1201, C1224, and C1226. A C4-type 1 zinc finger spans residues 1198-1226 (CLECDMELKLQGLDAMFFYGDVVSHMCKC). Residues H1272 and D1283 each act as for PL1-PRO activity in the active site. Residues 1323–1482 (NVCFVKGDVI…VIEKCQVTSV (160 aa)) enclose the Macro domain. The 73-residue stretch at 1537 to 1609 (DDARVFVQAN…VSQIRALLAN (73 aa)) folds into the DPUP domain. Residues 1608–1663 (ANKVDVLCTVDGVNFRSCCVAEGEVFGKTLGSVFCDGINVTKVRCSAIYKGKVFFQ) enclose the Ubiquitin-like 2 domain. One can recognise a Peptidase C16 2 domain in the interval 1678 to 1937 (AFGFDEPQLL…CVEYKPDLSQ (260 aa)). The For PL2-PRO activity role is filled by C1716. Residues C1794, C1796, C1828, and C1830 each coordinate Zn(2+). The C4-type 2 zinc-finger motif lies at 1794-1830 (CKCGVKQEQRKGVDAVMHFGTLDKGDLVRGYNIACTC). Residues H1873 and D1887 each act as for PL2-PRO activity in the active site. In terms of domain architecture, Nucleic acid-binding spans 1951 to 2052 (IKAQFRTFEK…TYFNRPSVVC (102 aa)). Positions 2107-2256 (QVVTEVRQEP…TDNKVIYTTE (150 aa)) constitute a G2M domain. Residues 2225-2645 (AIACYCAVKW…QSLYRPMLMV (421 aa)) form an HD1 region. 2 helical membrane passes run 2286-2306 (FFLV…NVIL) and 2314-2334 (IGPL…TFGV). The 3Ecto domain occupies 2322-2383 (GQIVAWFKTT…AINVVQHVVD (62 aa)). 2 disulfides stabilise this stretch: C2338/C2362 and C2353/C2359. A run of 2 helical transmembrane segments spans residues 2400–2420 (LVIG…LIGM) and 2442–2462 (LFVF…YIVV). A Y1 region spans residues 2470-2560 (CLCRHVMYGC…ELKRPVNPTD (91 aa)). The CoV Nsp3 Y domain maps to 2470-2837 (CLCRHVMYGC…LTTPFSLKGG (368 aa)). 8 residues coordinate Zn(2+): H2474, C2479, C2484, C2487, C2520, H2523, C2527, and C2530. The tract at residues 2474-2487 (HVMYGCSKPGCLFC) is ZF1. The interval 2520-2530 (CTKHQWNCLNC) is ZF2. A Y2 region spans residues 2561 to 2653 (SAYYSVTEVK…MVEKKLITTA (93 aa)). The segment at 2561–2837 (SAYYSVTEVK…LTTPFSLKGG (277 aa)) is coV-Y. The helical transmembrane segment at 2625–2645 (AGFLGAAVFYAQSLYRPMLMV) threads the bilayer. The interval 2654-2736 (NTGLSVSRTM…KSVMSAVNAG (83 aa)) is Y3. The Y4 stretch occupies residues 2737-2837 (VDFTDESCNN…LTTPFSLKGG (101 aa)). The next 6 helical transmembrane spans lie at 2847–2867 (LFVA…TYAV), 3096–3116 (AFDL…FFAL), 3118–3138 (ASSV…YYLI), 3150–3170 (VVVI…VFQV), 3177–3197 (LYAC…SVVM), and 3202–3222 (LVMY…AVVV). An HD2 region spans residues 2847–3222 (LFVANLICFI…FCIIYVAVVV (376 aa)). The Nsp4C domain occupies 3236–3333 (IGTEVRSDGT…TASVTTSFLQ (98 aa)). One can recognise a Peptidase C30 domain in the interval 3334–3635 (SGIVKMVSPT…YQQLAGVKLQ (302 aa)). Catalysis depends on for 3CL-PRO activity residues H3374 and C3478. The HD3 stretch occupies residues 3526–3860 (LPVQDYTQTV…VCCCYWGILS (335 aa)). 7 consecutive transmembrane segments (helical) span residues 3644-3664 (GTCC…SAFV), 3674-3694 (THML…MLLI), 3699-3719 (LYLT…YLVV), 3742-3762 (TYMD…FVTM), 3769-3789 (VFSI…WYFG), 3796-3816 (VLLF…LSLA), and 3840-3860 (LVLL…GILS). The RdRp Nsp7 cofactor domain occupies 3922–4010 (SRLTDVKCAN…DYVRDNTVLQ (89 aa)). Residues 4011-4207 (ALQSEFVNMA…HNEVSTVVLQ (197 aa)) enclose the RdRp Nsp8 cofactor domain. The region spanning 4208 to 4317 (NNELMPQKLR…GTLSSTVRLQ (110 aa)) is the Nsp9 ssRNA-binding domain. Residues 4318–4455 (AGTATEYASN…CVGTGSQFQS (138 aa)) form the ExoN/MTase coactivator domain. Zn(2+) is bound by residues C4391, C4394, H4400, C4407, C4433, C4436, C4444, and C4446. Zinc fingers lie at residues 4391 to 4407 (CIYC…DGLC) and 4433 to 4446 (CQVC…SCSC).

It belongs to the coronaviruses polyprotein 1ab family. In terms of assembly, 3CL-PRO exists as monomer and homodimer. Eight copies of nsp7 and eight copies of nsp8 assemble to form a heterohexadecamer. Nsp9 is a dimer. Nsp10 forms a dodecamer. Specific enzymatic cleavages in vivo by its own proteases yield mature proteins. 3CL-PRO and PL-PRO proteinases are autocatalytically processed.

It is found in the host membrane. The protein resides in the host cytoplasm. The protein localises to the host perinuclear region. The catalysed reaction is Thiol-dependent hydrolysis of ester, thioester, amide, peptide and isopeptide bonds formed by the C-terminal Gly of ubiquitin (a 76-residue protein attached to proteins as an intracellular targeting signal).. The enzyme catalyses TSAVLQ-|-SGFRK-NH2 and SGVTFQ-|-GKFKK the two peptides corresponding to the two self-cleavage sites of the SARS 3C-like proteinase are the two most reactive peptide substrates. The enzyme exhibits a strong preference for substrates containing Gln at P1 position and Leu at P2 position.. It carries out the reaction a 5'-end diphospho-ribonucleoside in mRNA + GTP + H(+) = a 5'-end (5'-triphosphoguanosine)-ribonucleoside in mRNA + diphosphate. Functionally, the papain-like proteinase 1 (PL1-PRO) and papain-like proteinase 2 (PL2-PRO) are responsible for the cleavages located at the N-terminus of the replicase polyprotein. In addition, PLP2 possesses a deubiquitinating/deISGylating activity and processes both 'Lys-48'- and 'Lys-63'-linked polyubiquitin chains from cellular substrates. Antagonizes innate immune induction of type I interferon by blocking the phosphorylation, dimerization and subsequent nuclear translocation of host IRF-3. In terms of biological role, responsible for the majority of cleavages as it cleaves the C-terminus of replicase polyprotein at 11 sites. Recognizes substrates containing the core sequence [ILMVF]-Q-|-[SGACN]. Inhibited by the substrate-analog Cbz-Val-Asn-Ser-Thr-Leu-Gln-CMK. Also contains an ADP-ribose-1''-phosphate (ADRP)-binding function. Nsp7-nsp8 hexadecamer may possibly confer processivity to the polymerase, maybe by binding to dsRNA or by producing primers utilized by the latter. Its function is as follows. Catalytic subunit of viral RNA capping enzyme which catalyzes the RNA guanylyltransferase reaction for genomic and sub-genomic RNAs. The kinase-like NiRAN domain of NSP12 transfers RNA to the amino terminus of NSP9, forming a covalent RNA-protein intermediate. Subsequently, the NiRAN domain transfers RNA to GDP, forming the core cap structure GpppA-RNA. The NSP14 and NSP16 methyltransferases then add methyl groups to form functional cap structures. Functionally, binds to the 40S ribosomal subunit and inhibits host translation. The nsp1-40S ribosome complex further induces an endonucleolytic cleavage near the 5'UTR of host mRNAs, targeting them for degradation. By suppressing host gene expression, nsp1 facilitates efficient viral gene expression in infected cells and evasion from host immune response. In Murine coronavirus (strain A59) (MHV-A59), this protein is Replicase polyprotein 1a.